The primary structure comprises 100 residues: Noncompact myelin-associated protein (100 aa).

Residues 1-28 (MTTATTLGDAVFSLNMTRGEDALYKSSG) lie on the Extracellular side of the membrane. The helical transmembrane segment at 29 to 49 (AIVAAIVVVVIIIVTLVLILL) threads the bilayer. Over 50-100 (KMYNRRMRTRRELEPKSPKPPVPPALDPSSNGSQQPATVTFDPANVHVETR) the chain is Cytoplasmic. Residues 58-100 (TRRELEPKSPKPPVPPALDPSSNGSQQPATVTFDPANVHVETR) are disordered.

Glycosylated. Found in the peripheral nervous system (PNS) Schwann cells (at protein level). Expressed in the PNS, primarily limited to Schwann cells.

It is found in the cell membrane. Plays a role in myelin formation. This chain is Noncompact myelin-associated protein (Ncmap), found in Mus musculus (Mouse).